The sequence spans 64 residues: Large ribosomal subunit protein uL29 (64 aa).

It belongs to the universal ribosomal protein uL29 family.

In Legionella pneumophila (strain Lens), this protein is Large ribosomal subunit protein uL29.